A 232-amino-acid polypeptide reads, in one-letter code: Anthranilate synthase component 2 (232 aa).

In terms of domain architecture, Glutamine amidotransferase type-1 spans 2 to 198 (RILVVDNYDS…LTCCGWTQDD (197 aa)). 55 to 57 (GPG) is an L-glutamine binding site. Cys-83 functions as the Nucleophile; for GATase activity in the catalytic mechanism. Residues Gln-87 and 133–134 (SL) contribute to the L-glutamine site. Active-site for GATase activity residues include His-172 and Glu-174.

As to quaternary structure, heterotetramer consisting of two non-identical subunits: a beta subunit (TrpG) and a large alpha subunit (TrpE).

It carries out the reaction chorismate + L-glutamine = anthranilate + pyruvate + L-glutamate + H(+). It functions in the pathway amino-acid biosynthesis; L-tryptophan biosynthesis; L-tryptophan from chorismate: step 1/5. Its function is as follows. Part of a heterotetrameric complex that catalyzes the two-step biosynthesis of anthranilate, an intermediate in the biosynthesis of L-tryptophan. In the first step, the glutamine-binding beta subunit (TrpG) of anthranilate synthase (AS) provides the glutamine amidotransferase activity which generates ammonia as a substrate that, along with chorismate, is used in the second step, catalyzed by the large alpha subunit of AS (TrpE) to produce anthranilate. In the absence of TrpG, TrpE can synthesize anthranilate directly from chorismate and high concentrations of ammonia. The sequence is that of Anthranilate synthase component 2 (trpG) from Mycobacterium tuberculosis (strain CDC 1551 / Oshkosh).